The sequence spans 30 residues: Bacteriocin curvaticin (30 aa).

A disulfide bond links Cys9 and Cys14.

It is found in the secreted. Its function is as follows. Has antibacterial activity against the Gram-positive bacterium L.monocytogenes. The chain is Bacteriocin curvaticin from Latilactobacillus curvatus (Lactobacillus curvatus).